A 141-amino-acid polypeptide reads, in one-letter code: MAAARGRGGQVGTKAKVSLGLPVGAVMNCADNSGAKNLYTIACFGIKGHLSKLPSASIGDMILCSVKKGSPKLRKKVLQAIVIRQRRPWRRRDGVFIYFEDNAGVIANPKGEMKGSQITGPVAKECADIWPKVASNAGSVV.

Belongs to the universal ribosomal protein uL14 family.

In Tetrahymena thermophila (strain SB210), this protein is Large ribosomal subunit protein uL14 (RPL23).